A 320-amino-acid chain; its full sequence is Glycerol-3-phosphate dehydrogenase [NAD(P)+] (320 aa).

NADPH is bound by residues S14, F15, R35, and K109. Sn-glycerol 3-phosphate is bound by residues K109 and G137. A141 contacts NADPH. Sn-glycerol 3-phosphate contacts are provided by K192, D248, S258, R259, and N260. Catalysis depends on K192, which acts as the Proton acceptor. An NADPH-binding site is contributed by R259. Residues L283 and E285 each contribute to the NADPH site.

This sequence belongs to the NAD-dependent glycerol-3-phosphate dehydrogenase family.

The protein localises to the cytoplasm. It catalyses the reaction sn-glycerol 3-phosphate + NAD(+) = dihydroxyacetone phosphate + NADH + H(+). The enzyme catalyses sn-glycerol 3-phosphate + NADP(+) = dihydroxyacetone phosphate + NADPH + H(+). It functions in the pathway membrane lipid metabolism; glycerophospholipid metabolism. Functionally, catalyzes the reduction of the glycolytic intermediate dihydroxyacetone phosphate (DHAP) to sn-glycerol 3-phosphate (G3P), the key precursor for phospholipid synthesis. The polypeptide is Glycerol-3-phosphate dehydrogenase [NAD(P)+] (Rickettsia typhi (strain ATCC VR-144 / Wilmington)).